A 390-amino-acid chain; its full sequence is tRNA-specific 2-thiouridylase MnmA (390 aa).

ATP is bound by residues G36–S43 and M62. The interaction with target base in tRNA stretch occupies residues N122–D124. C127 functions as the Nucleophile in the catalytic mechanism. C127 and C223 are joined by a disulfide. G151 lines the ATP pocket. Positions K173–Q175 are interaction with tRNA. C223 acts as the Cysteine persulfide intermediate in catalysis. Residues R335–Y336 form an interaction with tRNA region.

It belongs to the MnmA/TRMU family.

Its subcellular location is the cytoplasm. It carries out the reaction S-sulfanyl-L-cysteinyl-[protein] + uridine(34) in tRNA + AH2 + ATP = 2-thiouridine(34) in tRNA + L-cysteinyl-[protein] + A + AMP + diphosphate + H(+). Functionally, catalyzes the 2-thiolation of uridine at the wobble position (U34) of tRNA, leading to the formation of s(2)U34. The polypeptide is tRNA-specific 2-thiouridylase MnmA (Marinomonas sp. (strain MWYL1)).